A 528-amino-acid chain; its full sequence is Lysine--tRNA ligase (528 aa).

Residues 44-52 (PSGLPHIGT) carry the 'HIGH' region motif. The 'KMSKS' region signature appears at 290 to 294 (KISKS). An ATP-binding site is contributed by Lys293.

It belongs to the class-I aminoacyl-tRNA synthetase family.

Its subcellular location is the cytoplasm. It catalyses the reaction tRNA(Lys) + L-lysine + ATP = L-lysyl-tRNA(Lys) + AMP + diphosphate. This Rickettsia prowazekii (strain Madrid E) protein is Lysine--tRNA ligase (lysS).